A 62-amino-acid polypeptide reads, in one-letter code: Cobrotoxin II (62 aa).

Polar residues predominate over residues 1 to 16; the sequence is LECHNQQSSQTPTTTG. Residues 1–23 are disordered; it reads LECHNQQSSQTPTTTGCSGGENN. Cystine bridges form between Cys-3-Cys-24, Cys-17-Cys-41, Cys-43-Cys-54, and Cys-55-Cys-60.

This sequence belongs to the three-finger toxin family. Short-chain subfamily. Type I alpha-neurotoxin sub-subfamily. Expressed by the venom gland.

The protein localises to the secreted. In terms of biological role, binds to muscle nicotinic acetylcholine receptor (nAChR) and inhibit acetylcholine from binding to the receptor, thereby impairing neuromuscular transmission. The protein is Cobrotoxin II of Naja kaouthia (Monocled cobra).